We begin with the raw amino-acid sequence, 387 residues long: Alkanesulfonate monooxygenase (387 aa).

It belongs to the SsuD family.

The catalysed reaction is an alkanesulfonate + FMNH2 + O2 = an aldehyde + FMN + sulfite + H2O + 2 H(+). Functionally, catalyzes the desulfonation of aliphatic sulfonates. The protein is Alkanesulfonate monooxygenase of Cupriavidus necator (strain ATCC 17699 / DSM 428 / KCTC 22496 / NCIMB 10442 / H16 / Stanier 337) (Ralstonia eutropha).